The chain runs to 248 residues: 4-hydroxy-tetrahydrodipicolinate reductase (248 aa).

Asp28 lines the NAD(+) pocket. Lys29 contributes to the NADP(+) binding site. NAD(+) is bound by residues 78 to 80 and 102 to 105; these read ATT and SYNM. His134 functions as the Proton donor/acceptor in the catalytic mechanism. (S)-2,3,4,5-tetrahydrodipicolinate is bound at residue His135. The Proton donor role is filled by Lys138. Residue 144 to 145 coordinates (S)-2,3,4,5-tetrahydrodipicolinate; that stretch reads GT.

The protein belongs to the DapB family.

The protein resides in the cytoplasm. The enzyme catalyses (S)-2,3,4,5-tetrahydrodipicolinate + NAD(+) + H2O = (2S,4S)-4-hydroxy-2,3,4,5-tetrahydrodipicolinate + NADH + H(+). The catalysed reaction is (S)-2,3,4,5-tetrahydrodipicolinate + NADP(+) + H2O = (2S,4S)-4-hydroxy-2,3,4,5-tetrahydrodipicolinate + NADPH + H(+). The protein operates within amino-acid biosynthesis; L-lysine biosynthesis via DAP pathway; (S)-tetrahydrodipicolinate from L-aspartate: step 4/4. Its function is as follows. Catalyzes the conversion of 4-hydroxy-tetrahydrodipicolinate (HTPA) to tetrahydrodipicolinate. The polypeptide is 4-hydroxy-tetrahydrodipicolinate reductase (Exiguobacterium sibiricum (strain DSM 17290 / CCUG 55495 / CIP 109462 / JCM 13490 / 255-15)).